We begin with the raw amino-acid sequence, 219 residues long: Ribose-5-phosphate isomerase A (219 aa).

Residues 28-31 (TGST), 81-84 (DGAD), and 94-97 (KGGG) contribute to the substrate site. E103 acts as the Proton acceptor in catalysis. K121 lines the substrate pocket.

The protein belongs to the ribose 5-phosphate isomerase family. In terms of assembly, homodimer.

It carries out the reaction aldehydo-D-ribose 5-phosphate = D-ribulose 5-phosphate. It participates in carbohydrate degradation; pentose phosphate pathway; D-ribose 5-phosphate from D-ribulose 5-phosphate (non-oxidative stage): step 1/1. Its function is as follows. Catalyzes the reversible conversion of ribose-5-phosphate to ribulose 5-phosphate. The polypeptide is Ribose-5-phosphate isomerase A (Edwardsiella ictaluri (strain 93-146)).